The chain runs to 156 residues: Small ribosomal subunit protein uS7 (156 aa).

It belongs to the universal ribosomal protein uS7 family. As to quaternary structure, part of the 30S ribosomal subunit. Contacts proteins S9 and S11.

In terms of biological role, one of the primary rRNA binding proteins, it binds directly to 16S rRNA where it nucleates assembly of the head domain of the 30S subunit. Is located at the subunit interface close to the decoding center, probably blocks exit of the E-site tRNA. In Clostridium botulinum (strain Kyoto / Type A2), this protein is Small ribosomal subunit protein uS7.